Consider the following 573-residue polypeptide: Isocitrate dehydrogenase kinase/phosphatase (573 aa).

ATP-binding positions include 315–321 (APGIRGM) and Lys-336. The active site involves Asp-371.

The protein belongs to the AceK family.

The protein localises to the cytoplasm. The catalysed reaction is L-seryl-[isocitrate dehydrogenase] + ATP = O-phospho-L-seryl-[isocitrate dehydrogenase] + ADP + H(+). In terms of biological role, bifunctional enzyme which can phosphorylate or dephosphorylate isocitrate dehydrogenase (IDH) on a specific serine residue. This is a regulatory mechanism which enables bacteria to bypass the Krebs cycle via the glyoxylate shunt in response to the source of carbon. When bacteria are grown on glucose, IDH is fully active and unphosphorylated, but when grown on acetate or ethanol, the activity of IDH declines drastically concomitant with its phosphorylation. In Enterobacter sp. (strain 638), this protein is Isocitrate dehydrogenase kinase/phosphatase.